The sequence spans 152 residues: Transcriptional repressor NrdR (152 aa).

A zinc finger lies at 3 to 34 (CPKCGSLNDKVVDTRQSKDGTVIRRRRECLDC). One can recognise an ATP-cone domain in the interval 49 to 139 (IVVKKKNGTT…VYNEFQDIKD (91 aa)).

It belongs to the NrdR family. The cofactor is Zn(2+).

Negatively regulates transcription of bacterial ribonucleotide reductase nrd genes and operons by binding to NrdR-boxes. This Persephonella marina (strain DSM 14350 / EX-H1) protein is Transcriptional repressor NrdR.